A 540-amino-acid chain; its full sequence is Chaperonin GroEL (540 aa).

Residues 29 to 32 (TLGP), 86 to 90 (DGTTT), glycine 413, 476 to 478 (NAA), and aspartate 492 contribute to the ATP site.

It belongs to the chaperonin (HSP60) family. In terms of assembly, forms a cylinder of 14 subunits composed of two heptameric rings stacked back-to-back. Interacts with the co-chaperonin GroES.

It localises to the cytoplasm. The enzyme catalyses ATP + H2O + a folded polypeptide = ADP + phosphate + an unfolded polypeptide.. Together with its co-chaperonin GroES, plays an essential role in assisting protein folding. The GroEL-GroES system forms a nano-cage that allows encapsulation of the non-native substrate proteins and provides a physical environment optimized to promote and accelerate protein folding. This chain is Chaperonin GroEL, found in Streptococcus agalactiae.